Here is a 426-residue protein sequence, read N- to C-terminus: Tol-Pal system protein TolB (426 aa).

Positions 1-24 (MKLKSRFTSIIGVITLFFSQTVTA) are cleaved as a signal peptide.

Belongs to the TolB family. As to quaternary structure, the Tol-Pal system is composed of five core proteins: the inner membrane proteins TolA, TolQ and TolR, the periplasmic protein TolB and the outer membrane protein Pal. They form a network linking the inner and outer membranes and the peptidoglycan layer.

It is found in the periplasm. Part of the Tol-Pal system, which plays a role in outer membrane invagination during cell division and is important for maintaining outer membrane integrity. The polypeptide is Tol-Pal system protein TolB (Actinobacillus pleuropneumoniae serotype 5b (strain L20)).